The following is a 147-amino-acid chain: Large ribosomal subunit protein uL15 (147 aa).

Over residues 1–15 (MKLHELKPAKGAVKE) the composition is skewed to basic and acidic residues. A disordered region spans residues 1-47 (MKLHELKPAKGAVKEVKRKGRGRATGNGKTAGRGHNGQNSRSGGGVR). A compositionally biased stretch (gly residues) spans 23 to 35 (RATGNGKTAGRGH).

It belongs to the universal ribosomal protein uL15 family. As to quaternary structure, part of the 50S ribosomal subunit.

Its function is as follows. Binds to the 23S rRNA. The polypeptide is Large ribosomal subunit protein uL15 (Alkaliphilus metalliredigens (strain QYMF)).